The sequence spans 159 residues: MRILGLDPGLATLGYGCIEVYRDTCQVRDFGVITTSADLPTGDRLQSLYNDLHTLIPILQPDLVALERLFFYRMSHTIGVAQARGVILLVLSQRHCPLLELTPPQVKQALTGYGNATKIEVQRAVQRELHLCTLPQPDDAADALAIALTASRHCGHING.

Active-site residues include aspartate 7, glutamate 67, and aspartate 139. Mg(2+) contacts are provided by aspartate 7, glutamate 67, and aspartate 139.

Belongs to the RuvC family. In terms of assembly, homodimer which binds Holliday junction (HJ) DNA. The HJ becomes 2-fold symmetrical on binding to RuvC with unstacked arms; it has a different conformation from HJ DNA in complex with RuvA. In the full resolvosome a probable DNA-RuvA(4)-RuvB(12)-RuvC(2) complex forms which resolves the HJ. It depends on Mg(2+) as a cofactor.

Its subcellular location is the cytoplasm. The catalysed reaction is Endonucleolytic cleavage at a junction such as a reciprocal single-stranded crossover between two homologous DNA duplexes (Holliday junction).. The RuvA-RuvB-RuvC complex processes Holliday junction (HJ) DNA during genetic recombination and DNA repair. Endonuclease that resolves HJ intermediates. Cleaves cruciform DNA by making single-stranded nicks across the HJ at symmetrical positions within the homologous arms, yielding a 5'-phosphate and a 3'-hydroxyl group; requires a central core of homology in the junction. The consensus cleavage sequence is 5'-(A/T)TT(C/G)-3'. Cleavage occurs on the 3'-side of the TT dinucleotide at the point of strand exchange. HJ branch migration catalyzed by RuvA-RuvB allows RuvC to scan DNA until it finds its consensus sequence, where it cleaves and resolves the cruciform DNA. This Thermosynechococcus vestitus (strain NIES-2133 / IAM M-273 / BP-1) protein is Crossover junction endodeoxyribonuclease RuvC.